Consider the following 1601-residue polypeptide: Ectopic P granules protein 5 (1601 aa).

Residues 1–109 form a disordered region; that stretch reads MAELVRPKKP…EAPPIPARNL (109 aa). Basic and acidic residues predominate over residues 15-26; it reads RPQSDDAPRIPD.

Belongs to the EPG5 family.

It is found in the cytoplasm. Its function is as follows. Involved in autophagy. Has a role in the degradation of protein aggregates within autophagosomes. Essential for starvation-induced autotrophy and omegasome development. The protein is Ectopic P granules protein 5 (epg-5) of Caenorhabditis briggsae.